Consider the following 186-residue polypeptide: 19 kDa globulin (186 aa).

Positions 1 to 22 (MASKVVFFAAALMAAMVAISGA) are cleaved as a signal peptide. The segment at 108–155 (PLEQGWSSSSSEYYGGEGSSSEQGYYGEGSSEEGYYGEQQQQPGMTRV) is disordered. The span at 110-149 (EQGWSSSSSEYYGGEGSSSEQGYYGEGSSEEGYYGEQQQQ) shows a compositional bias: low complexity.

This sequence belongs to the 2S seed storage albumins family.

Its subcellular location is the secreted. Seed storage protein. In Oryza sativa subsp. japonica (Rice), this protein is 19 kDa globulin.